The following is a 493-amino-acid chain: Glycerol kinase (493 aa).

Thr-12 provides a ligand contact to ADP. The ATP site is built by Thr-12, Thr-13, and Ser-14. Thr-12 provides a ligand contact to sn-glycerol 3-phosphate. An ADP-binding site is contributed by Arg-16. Sn-glycerol 3-phosphate is bound by residues Arg-82, Glu-83, Tyr-132, and Asp-239. Residues Arg-82, Glu-83, Tyr-132, Asp-239, and Gln-240 each coordinate glycerol. ADP contacts are provided by Thr-261 and Gly-303. The ATP site is built by Thr-261, Gly-303, Gln-307, and Gly-402. Gly-402 and Asn-406 together coordinate ADP.

This sequence belongs to the FGGY kinase family.

It catalyses the reaction glycerol + ATP = sn-glycerol 3-phosphate + ADP + H(+). It functions in the pathway polyol metabolism; glycerol degradation via glycerol kinase pathway; sn-glycerol 3-phosphate from glycerol: step 1/1. Functionally, key enzyme in the regulation of glycerol uptake and metabolism. Catalyzes the phosphorylation of glycerol to yield sn-glycerol 3-phosphate. This Thermococcus onnurineus (strain NA1) protein is Glycerol kinase.